A 134-amino-acid chain; its full sequence is Aspartate 1-decarboxylase (134 aa).

Catalysis depends on serine 25, which acts as the Schiff-base intermediate with substrate; via pyruvic acid. Serine 25 carries the post-translational modification Pyruvic acid (Ser). Threonine 57 lines the substrate pocket. The active-site Proton donor is tyrosine 58. Substrate is bound at residue 73–75; that stretch reads GAA.

Belongs to the PanD family. As to quaternary structure, heterooctamer of four alpha and four beta subunits. Pyruvate serves as cofactor. In terms of processing, is synthesized initially as an inactive proenzyme, which is activated by self-cleavage at a specific serine bond to produce a beta-subunit with a hydroxyl group at its C-terminus and an alpha-subunit with a pyruvoyl group at its N-terminus.

The protein localises to the cytoplasm. It catalyses the reaction L-aspartate + H(+) = beta-alanine + CO2. It functions in the pathway cofactor biosynthesis; (R)-pantothenate biosynthesis; beta-alanine from L-aspartate: step 1/1. Functionally, catalyzes the pyruvoyl-dependent decarboxylation of aspartate to produce beta-alanine. The sequence is that of Aspartate 1-decarboxylase from Citrifermentans bemidjiense (strain ATCC BAA-1014 / DSM 16622 / JCM 12645 / Bem) (Geobacter bemidjiensis).